A 293-amino-acid chain; its full sequence is MLKKIIGIGVSAMLALSLAACGSENDENASAAEQVNKTIIGIDPGSGIMSLTDKAMKDYDLNDWTLISASSAAMTATLKKSYDRKKPIIITGWTPHWMFSRYKLKYLDDPKQSYGSAEEIHTITRKGFSKEQPNAAKLLSQFKWTQDEMGEIMIKVEEGEKPAKVAAEYVNKHKDQIAEWTKGVQKVKGDKINLAYVAWDSEIASTNVIGKVLEDLGYEVTLTQVEAGPMWTAIATGSADASLSAWLPNTHKAYAAKYKGKYDDIGTSMTGVKMGLVVPQYMKNVNSIEDLKK.

A signal peptide spans 1-20; that stretch reads MLKKIIGIGVSAMLALSLAA. Cys-21 is lipidated: N-palmitoyl cysteine. A lipid anchor (S-diacylglycerol cysteine) is attached at Cys-21.

The complex is composed of two ATP-binding proteins (OpuAA), two transmembrane proteins (OpuAB) and a solute-binding protein (OpuAC). Interacts with FloT.

The protein resides in the cell membrane. It is found in the membrane raft. Involved in a multicomponent binding-protein-dependent transport system for glycine betaine. The polypeptide is Glycine betaine-binding protein OpuAC (opuAC) (Bacillus subtilis (strain 168)).